A 138-amino-acid polypeptide reads, in one-letter code: Large ribosomal subunit protein uL16 (138 aa).

Residues 1–13 (MLQPKRRKYRKEQ) show a composition bias toward basic residues. The segment at 1–20 (MLQPKRRKYRKEQKGRNTGI) is disordered.

The protein belongs to the universal ribosomal protein uL16 family. In terms of assembly, part of the 50S ribosomal subunit.

Functionally, binds 23S rRNA and is also seen to make contacts with the A and possibly P site tRNAs. The chain is Large ribosomal subunit protein uL16 from Ralstonia nicotianae (strain ATCC BAA-1114 / GMI1000) (Ralstonia solanacearum).